The following is a 443-amino-acid chain: Thymidine phosphorylase (443 aa).

This sequence belongs to the thymidine/pyrimidine-nucleoside phosphorylase family. As to quaternary structure, homodimer.

The catalysed reaction is thymidine + phosphate = 2-deoxy-alpha-D-ribose 1-phosphate + thymine. It functions in the pathway pyrimidine metabolism; dTMP biosynthesis via salvage pathway; dTMP from thymine: step 1/2. In terms of biological role, the enzymes which catalyze the reversible phosphorolysis of pyrimidine nucleosides are involved in the degradation of these compounds and in their utilization as carbon and energy sources, or in the rescue of pyrimidine bases for nucleotide synthesis. This is Thymidine phosphorylase from Shewanella halifaxensis (strain HAW-EB4).